The chain runs to 94 residues: Protein RnfH (94 aa).

It belongs to the UPF0125 (RnfH) family.

The protein is Protein RnfH of Serratia proteamaculans (strain 568).